The chain runs to 135 residues: Ribosome-binding factor A (135 aa).

This sequence belongs to the RbfA family. Monomer. Binds 30S ribosomal subunits, but not 50S ribosomal subunits or 70S ribosomes.

It is found in the cytoplasm. In terms of biological role, one of several proteins that assist in the late maturation steps of the functional core of the 30S ribosomal subunit. Associates with free 30S ribosomal subunits (but not with 30S subunits that are part of 70S ribosomes or polysomes). Required for efficient processing of 16S rRNA. May interact with the 5'-terminal helix region of 16S rRNA. This Bartonella quintana (strain Toulouse) (Rochalimaea quintana) protein is Ribosome-binding factor A.